The sequence spans 152 residues: Small ribosomal subunit protein uS8m (152 aa).

The protein belongs to the universal ribosomal protein uS8 family.

The protein localises to the mitochondrion. The chain is Small ribosomal subunit protein uS8m (RPS8) from Marchantia polymorpha (Common liverwort).